Reading from the N-terminus, the 765-residue chain is Zinc finger and BTB domain-containing protein 49 (765 aa).

The BTB domain maps to 25–91 (CDCMLVVKGV…MYTSHLDLNQ (67 aa)). Disordered regions lie at residues 165-203 (QQNK…GSCT) and 275-294 (NFLA…DATC). 7 consecutive C2H2-type zinc fingers follow at residues 395-417 (YACE…KRSH), 423-445 (FECN…LRRH), 451-473 (YICE…IIIH), 479-501 (HLCD…KKTH), 507-529 (FTCD…RIRH), 535-557 (YSCS…VRTH), and 563-585 (YTCE…KKMH).

The protein belongs to the krueppel C2H2-type zinc-finger protein family. Isoform 1 interacts with EP300 and KAT5/Tip60. The interaction with EP300 is direct and leads to synergistic induction of CDKN1A. On the CDKN1A promoter, forms a complex with ZBTB17/Miz-1; this interaction leads to additive CDKN1A transactivation. Isoform 3 also interacts with ZBTB17; this interaction may block ZBTB17 repressor activity. As to expression, highly expressed in normal epidermis and in other epithelial tissues, including in colon and lung. Tends to be down-regulated in colon, lung and skin cancer tissues.

It is found in the cytoplasm. It localises to the nucleus. Functionally, transcription factor. Inhibits cell proliferation by activating either CDKN1A/p21 transcription or RB1 transcription. In terms of biological role, binds CDKN1A promoter and activates its transcription; this activity is further potentiated in the presence of EP300 (synergistic) and ZBTB17/Miz-1 (additive). Its function is as follows. Activates RB1 transcription most probably by antagonizing ZBTB17 repression of RB1. Does not bind directly RB1 promoter. This Homo sapiens (Human) protein is Zinc finger and BTB domain-containing protein 49 (ZBTB49).